The sequence spans 100 residues: C-X-C motif chemokine 2 (100 aa).

The signal sequence occupies residues 1–31 (MAPPTRQLLNAVLVLLLLLATNHQGTGVVVA). Cystine bridges form between Cys-36-Cys-62 and Cys-38-Cys-78.

Belongs to the intercrine alpha (chemokine CxC) family. In terms of assembly, homotetramer. In terms of tissue distribution, at least expressed in the lung and trachea.

It localises to the secreted. Chemotactic for human polymorphonuclear leukocytes but does not induce chemokinesis or an oxidative burst. Contributes to neutrophil activation during inflammation. The sequence is that of C-X-C motif chemokine 2 (Cxcl2) from Rattus norvegicus (Rat).